Consider the following 271-residue polypeptide: Potential ATP-binding protein (271 aa).

34-41 serves as a coordination point for ATP; it reads GQPGVGKT.

In Staphylococcus aureus, this protein is Potential ATP-binding protein.